Here is a 332-residue protein sequence, read N- to C-terminus: Glycerol-3-phosphate dehydrogenase [NAD(P)+] (332 aa).

Residues W11, R30, and K108 each contribute to the NADPH site. Sn-glycerol 3-phosphate contacts are provided by K108, G137, and S139. A141 serves as a coordination point for NADPH. Residues K192, D245, S255, R256, and N257 each coordinate sn-glycerol 3-phosphate. The active-site Proton acceptor is the K192. Residue R256 participates in NADPH binding. Residues V280 and E282 each coordinate NADPH.

The protein belongs to the NAD-dependent glycerol-3-phosphate dehydrogenase family.

It is found in the cytoplasm. The enzyme catalyses sn-glycerol 3-phosphate + NAD(+) = dihydroxyacetone phosphate + NADH + H(+). The catalysed reaction is sn-glycerol 3-phosphate + NADP(+) = dihydroxyacetone phosphate + NADPH + H(+). It participates in membrane lipid metabolism; glycerophospholipid metabolism. Its function is as follows. Catalyzes the reduction of the glycolytic intermediate dihydroxyacetone phosphate (DHAP) to sn-glycerol 3-phosphate (G3P), the key precursor for phospholipid synthesis. This Paraburkholderia phymatum (strain DSM 17167 / CIP 108236 / LMG 21445 / STM815) (Burkholderia phymatum) protein is Glycerol-3-phosphate dehydrogenase [NAD(P)+].